A 98-amino-acid chain; its full sequence is Aspartyl/glutamyl-tRNA(Asn/Gln) amidotransferase subunit C (98 aa).

The disordered stretch occupies residues 76-98 (QVLSGAPDAEDGRFKVPAILEED).

This sequence belongs to the GatC family. Heterotrimer of A, B and C subunits.

The catalysed reaction is L-glutamyl-tRNA(Gln) + L-glutamine + ATP + H2O = L-glutaminyl-tRNA(Gln) + L-glutamate + ADP + phosphate + H(+). It catalyses the reaction L-aspartyl-tRNA(Asn) + L-glutamine + ATP + H2O = L-asparaginyl-tRNA(Asn) + L-glutamate + ADP + phosphate + 2 H(+). Allows the formation of correctly charged Asn-tRNA(Asn) or Gln-tRNA(Gln) through the transamidation of misacylated Asp-tRNA(Asn) or Glu-tRNA(Gln) in organisms which lack either or both of asparaginyl-tRNA or glutaminyl-tRNA synthetases. The reaction takes place in the presence of glutamine and ATP through an activated phospho-Asp-tRNA(Asn) or phospho-Glu-tRNA(Gln). The polypeptide is Aspartyl/glutamyl-tRNA(Asn/Gln) amidotransferase subunit C (Renibacterium salmoninarum (strain ATCC 33209 / DSM 20767 / JCM 11484 / NBRC 15589 / NCIMB 2235)).